Reading from the N-terminus, the 226-residue chain is dITP/XTP pyrophosphatase (226 aa).

14–19 (TGNKDK) is a substrate binding site. Mg(2+)-binding residues include Glu49 and Asp83. Catalysis depends on Asp83, which acts as the Proton acceptor. Substrate-binding positions include Thr84, 176-179 (FGYD), Lys199, and 204-205 (HR).

This sequence belongs to the HAM1 NTPase family. As to quaternary structure, homodimer. Mg(2+) serves as cofactor.

The enzyme catalyses XTP + H2O = XMP + diphosphate + H(+). It carries out the reaction dITP + H2O = dIMP + diphosphate + H(+). The catalysed reaction is ITP + H2O = IMP + diphosphate + H(+). In terms of biological role, pyrophosphatase that catalyzes the hydrolysis of nucleoside triphosphates to their monophosphate derivatives, with a high preference for the non-canonical purine nucleotides XTP (xanthosine triphosphate), dITP (deoxyinosine triphosphate) and ITP. Seems to function as a house-cleaning enzyme that removes non-canonical purine nucleotides from the nucleotide pool, thus preventing their incorporation into DNA/RNA and avoiding chromosomal lesions. In Chlorobaculum tepidum (strain ATCC 49652 / DSM 12025 / NBRC 103806 / TLS) (Chlorobium tepidum), this protein is dITP/XTP pyrophosphatase.